Here is a 322-residue protein sequence, read N- to C-terminus: 4-hydroxythreonine-4-phosphate dehydrogenase (322 aa).

2 residues coordinate substrate: His126 and Thr127. 3 residues coordinate a divalent metal cation: His160, His205, and His260. Residues Lys268, Asn277, and Arg286 each contribute to the substrate site.

This sequence belongs to the PdxA family. In terms of assembly, homodimer. Requires Zn(2+) as cofactor. Mg(2+) serves as cofactor. The cofactor is Co(2+).

It is found in the cytoplasm. It catalyses the reaction 4-(phosphooxy)-L-threonine + NAD(+) = 3-amino-2-oxopropyl phosphate + CO2 + NADH. Its pathway is cofactor biosynthesis; pyridoxine 5'-phosphate biosynthesis; pyridoxine 5'-phosphate from D-erythrose 4-phosphate: step 4/5. Catalyzes the NAD(P)-dependent oxidation of 4-(phosphooxy)-L-threonine (HTP) into 2-amino-3-oxo-4-(phosphooxy)butyric acid which spontaneously decarboxylates to form 3-amino-2-oxopropyl phosphate (AHAP). The sequence is that of 4-hydroxythreonine-4-phosphate dehydrogenase from Paracoccus denitrificans (strain Pd 1222).